A 1324-amino-acid polypeptide reads, in one-letter code: RNA2 polyprotein (1324 aa).

Belongs to the nepoviruses RNA2 polyprotein family. In terms of processing, specific enzymatic cleavages in vivo by the P1 encoded 3C-like protease yield mature proteins. Post-translationally, the N-terminus of the coat protein is blocked.

It localises to the host cell junction. The protein resides in the host plasmodesma. It is found in the host cytoplasm. The protein localises to the host nucleus. Its subcellular location is the virion. In terms of biological role, implicated in RNA2 replication. Could also be required for nematode transmission of the virus. Its function is as follows. Transports viral genome to neighboring plant cells directly through plasmosdesmata, without any budding. The movement protein allows efficient cell to cell propagation, by bypassing the host cell wall barrier. Acts by forming a tubular structure at the host plasmodesmata, enlarging it enough to allow free passage of virion capsids. The chain is RNA2 polyprotein from Apium graveolens (Celery).